Consider the following 306-residue polypeptide: Agmatinase (306 aa).

Mn(2+) contacts are provided by His-126, Asp-149, His-151, Asp-153, Asp-230, and Asp-232.

It belongs to the arginase family. Agmatinase subfamily. It depends on Mn(2+) as a cofactor.

The catalysed reaction is agmatine + H2O = urea + putrescine. It participates in amine and polyamine biosynthesis; putrescine biosynthesis via agmatine pathway; putrescine from agmatine: step 1/1. Its function is as follows. Catalyzes the formation of putrescine from agmatine. This is Agmatinase from Citrobacter koseri (strain ATCC BAA-895 / CDC 4225-83 / SGSC4696).